The chain runs to 296 residues: GTP cyclohydrolase FolE2 (296 aa).

This sequence belongs to the GTP cyclohydrolase IV family.

It carries out the reaction GTP + H2O = 7,8-dihydroneopterin 3'-triphosphate + formate + H(+). Its pathway is cofactor biosynthesis; 7,8-dihydroneopterin triphosphate biosynthesis; 7,8-dihydroneopterin triphosphate from GTP: step 1/1. Its function is as follows. Converts GTP to 7,8-dihydroneopterin triphosphate. This chain is GTP cyclohydrolase FolE2, found in Delftia acidovorans (strain DSM 14801 / SPH-1).